Reading from the N-terminus, the 298-residue chain is 3-hydroxyisobutyrate dehydrogenase (298 aa).

NAD(+) contacts are provided by residues Thr2–Phe30, Leu65–Pro66, and Thr96. Residue Lys171 is part of the active site. Lys246 contacts NAD(+).

This sequence belongs to the HIBADH-related family.

It carries out the reaction 3-hydroxy-2-methylpropanoate + NAD(+) = 2-methyl-3-oxopropanoate + NADH + H(+). The protein operates within amino-acid degradation; L-valine degradation. The protein is 3-hydroxyisobutyrate dehydrogenase of Pseudomonas aeruginosa (strain ATCC 15692 / DSM 22644 / CIP 104116 / JCM 14847 / LMG 12228 / 1C / PRS 101 / PAO1).